A 413-amino-acid polypeptide reads, in one-letter code: Multifunctional CCA protein (413 aa).

ATP is bound by residues Gly8 and Arg11. Gly8 and Arg11 together coordinate CTP. Mg(2+) contacts are provided by Asp21 and Asp23. Positions 91, 137, and 140 each coordinate ATP. CTP contacts are provided by Arg91, Arg137, and Arg140. The HD domain maps to 228 to 329; it reads TGIHTLMVLE…VKIFDKADLW (102 aa).

It belongs to the tRNA nucleotidyltransferase/poly(A) polymerase family. Bacterial CCA-adding enzyme type 1 subfamily. As to quaternary structure, monomer. Can also form homodimers and oligomers. Mg(2+) is required as a cofactor. Requires Ni(2+) as cofactor.

The catalysed reaction is a tRNA precursor + 2 CTP + ATP = a tRNA with a 3' CCA end + 3 diphosphate. It catalyses the reaction a tRNA with a 3' CCA end + 2 CTP + ATP = a tRNA with a 3' CCACCA end + 3 diphosphate. Functionally, catalyzes the addition and repair of the essential 3'-terminal CCA sequence in tRNAs without using a nucleic acid template. Adds these three nucleotides in the order of C, C, and A to the tRNA nucleotide-73, using CTP and ATP as substrates and producing inorganic pyrophosphate. tRNA 3'-terminal CCA addition is required both for tRNA processing and repair. Also involved in tRNA surveillance by mediating tandem CCA addition to generate a CCACCA at the 3' terminus of unstable tRNAs. While stable tRNAs receive only 3'-terminal CCA, unstable tRNAs are marked with CCACCA and rapidly degraded. This chain is Multifunctional CCA protein, found in Shewanella sediminis (strain HAW-EB3).